An 857-amino-acid chain; its full sequence is Protein ARG5,6, mitochondrial (857 aa).

The region spanning 341–492 (INRNSLRDFG…FDSSSIGSSL (152 aa)) is the N-acetyltransferase domain. Residues 509–532 (GFHHSTVRRNTNPNPPLSEGKQTE) are disordered. The active site involves C669.

The protein in the N-terminal section; belongs to the acetylglutamate kinase family. This sequence in the C-terminal section; belongs to the NAGSA dehydrogenase family.

It localises to the mitochondrion. The catalysed reaction is N-acetyl-L-glutamate 5-semialdehyde + phosphate + NADP(+) = N-acetyl-L-glutamyl 5-phosphate + NADPH + H(+). The enzyme catalyses N-acetyl-L-glutamate + ATP = N-acetyl-L-glutamyl 5-phosphate + ADP. Its pathway is amino-acid biosynthesis; L-arginine biosynthesis; N(2)-acetyl-L-ornithine from L-glutamate: step 2/4. The protein operates within amino-acid biosynthesis; L-arginine biosynthesis; N(2)-acetyl-L-ornithine from L-glutamate: step 3/4. In Candida albicans (Yeast), this protein is Protein ARG5,6, mitochondrial (ARG5,6).